The following is a 416-amino-acid chain: Catalase-peroxidase 2 (416 aa).

The signal sequence occupies residues 1-20; sequence MLLPLIVFLLSVLIHHRIYS.

This sequence belongs to the peroxidase family. Peroxidase/catalase subfamily. As to quaternary structure, homodimer or homotetramer. The cofactor is heme b. Post-translationally, formation of the three residue Trp-Tyr-Met cross-link is important for the catalase, but not the peroxidase activity of the enzyme.

The catalysed reaction is H2O2 + AH2 = A + 2 H2O. The enzyme catalyses 2 H2O2 = O2 + 2 H2O. Functionally, bifunctional enzyme with both catalase and broad-spectrum peroxidase activity. The polypeptide is Catalase-peroxidase 2 (katG2) (Alkaliphilus metalliredigens (strain QYMF)).